The chain runs to 217 residues: Peptide methionine sulfoxide reductase MsrA (217 aa).

Residue Cys56 is part of the active site.

This sequence belongs to the MsrA Met sulfoxide reductase family.

The catalysed reaction is L-methionyl-[protein] + [thioredoxin]-disulfide + H2O = L-methionyl-(S)-S-oxide-[protein] + [thioredoxin]-dithiol. The enzyme catalyses [thioredoxin]-disulfide + L-methionine + H2O = L-methionine (S)-S-oxide + [thioredoxin]-dithiol. Its function is as follows. Has an important function as a repair enzyme for proteins that have been inactivated by oxidation. Catalyzes the reversible oxidation-reduction of methionine sulfoxide in proteins to methionine. This is Peptide methionine sulfoxide reductase MsrA from Corynebacterium glutamicum (strain ATCC 13032 / DSM 20300 / JCM 1318 / BCRC 11384 / CCUG 27702 / LMG 3730 / NBRC 12168 / NCIMB 10025 / NRRL B-2784 / 534).